The chain runs to 273 residues: Putative pyruvate, phosphate dikinase regulatory protein (273 aa).

149 to 156 serves as a coordination point for ADP; it reads GPSRTSKT.

This sequence belongs to the pyruvate, phosphate/water dikinase regulatory protein family. PDRP subfamily.

The catalysed reaction is N(tele)-phospho-L-histidyl/L-threonyl-[pyruvate, phosphate dikinase] + ADP = N(tele)-phospho-L-histidyl/O-phospho-L-threonyl-[pyruvate, phosphate dikinase] + AMP + H(+). It carries out the reaction N(tele)-phospho-L-histidyl/O-phospho-L-threonyl-[pyruvate, phosphate dikinase] + phosphate + H(+) = N(tele)-phospho-L-histidyl/L-threonyl-[pyruvate, phosphate dikinase] + diphosphate. In terms of biological role, bifunctional serine/threonine kinase and phosphorylase involved in the regulation of the pyruvate, phosphate dikinase (PPDK) by catalyzing its phosphorylation/dephosphorylation. This Rickettsia massiliae (strain Mtu5) protein is Putative pyruvate, phosphate dikinase regulatory protein.